The sequence spans 542 residues: T-complex protein 1 subunit delta (542 aa).

Over residues 1 to 16 (MPENVAPRTGPPAGAA) the composition is skewed to low complexity. Residues 1 to 31 (MPENVAPRTGPPAGAAGAAGGRGKSAYQDRD) are disordered. An Omega-N-methylarginine modification is found at Arg-22. Lys-24 bears the N6-acetyllysine mark. Residue Ser-39 is modified to Phosphoserine. Position 56 (Gly-56) interacts with ADP. Gly-56 serves as a coordination point for ATP. Mg(2+) is bound at residue Asp-107. ADP contacts are provided by Gly-108, Thr-109, Thr-110, Ser-111, Asn-175, Ser-176, and Lys-177. Positions 108 and 109 each coordinate ATP. Residue Lys-177 coordinates ATP. Phosphoserine is present on residues Ser-187 and Ser-205. Lys-291, Lys-305, Lys-322, and Lys-329 each carry N6-acetyllysine. Gly-428 contacts ADP. Ser-447 bears the Phosphoserine mark. An ADP-binding site is contributed by Gln-513.

Belongs to the TCP-1 chaperonin family. As to quaternary structure, component of the chaperonin-containing T-complex (TRiC), a hexadecamer composed of two identical back-to-back stacked rings enclosing a protein folding chamber. Each ring is made up of eight different subunits: TCP1/CCT1, CCT2, CCT3, CCT4, CCT5, CCT6A/CCT6, CCT7, CCT8. Interacts with PACRG. Interacts with DNAAF4. Interacts with DLEC1.

It is found in the cytoplasm. Its subcellular location is the melanosome. The protein localises to the cytoskeleton. The protein resides in the microtubule organizing center. It localises to the centrosome. It is found in the cilium basal body. The catalysed reaction is ATP + H2O = ADP + phosphate + H(+). In terms of biological role, component of the chaperonin-containing T-complex (TRiC), a molecular chaperone complex that assists the folding of actin, tubulin and other proteins upon ATP hydrolysis. The TRiC complex mediates the folding of WRAP53/TCAB1, thereby regulating telomere maintenance. As part of the TRiC complex may play a role in the assembly of BBSome, a complex involved in ciliogenesis regulating transports vesicles to the cilia. This is T-complex protein 1 subunit delta (CCT4) from Bos taurus (Bovine).